The primary structure comprises 62 residues: Zinc metalloproteinase-disintegrin-like BaG (62 aa).

The Peptidase M12B domain occupies K24 to H54. A glycan (N-linked (GlcNAc...) asparagine) is linked at N29. H50 serves as a coordination point for Zn(2+). Residue E51 is part of the active site. A Zn(2+)-binding site is contributed by H54.

It belongs to the venom metalloproteinase (M12B) family. P-III subfamily. P-IIIc sub-subfamily. In terms of assembly, dimer. The cofactor is Zn(2+). In terms of processing, the N-terminus is blocked. Expressed by the venom gland.

The protein localises to the secreted. With respect to regulation, inhibited by EDTA, and 1,10-phenanthroline. Functionally, snake venom Zinc metalloproteinase that inhibits ADP-induced platelet aggregation and inhibits the alpha-5/beta-1 (ITGA5/ITGB1) integrin, a fibronectin receptor. Has caseinolytic activity. Induces the detachment of cells that are bound to fibronectin. The protein is Zinc metalloproteinase-disintegrin-like BaG of Bothrops alternatus (Urutu).